Here is a 279-residue protein sequence, read N- to C-terminus: Ribosomal RNA small subunit methyltransferase A (279 aa).

Residues His15, Leu17, Gly42, Glu64, Asp89, and Asn109 each coordinate S-adenosyl-L-methionine.

This sequence belongs to the class I-like SAM-binding methyltransferase superfamily. rRNA adenine N(6)-methyltransferase family. RsmA subfamily.

The protein resides in the cytoplasm. It carries out the reaction adenosine(1518)/adenosine(1519) in 16S rRNA + 4 S-adenosyl-L-methionine = N(6)-dimethyladenosine(1518)/N(6)-dimethyladenosine(1519) in 16S rRNA + 4 S-adenosyl-L-homocysteine + 4 H(+). Functionally, specifically dimethylates two adjacent adenosines (A1518 and A1519) in the loop of a conserved hairpin near the 3'-end of 16S rRNA in the 30S particle. May play a critical role in biogenesis of 30S subunits. The protein is Ribosomal RNA small subunit methyltransferase A of Prochlorococcus marinus (strain SARG / CCMP1375 / SS120).